The sequence spans 121 residues: Small ribosomal subunit protein uS13 (121 aa).

The disordered stretch occupies residues 94–121; it reads GLPVRGQNTKNNARTRKGPRRTVANKKK. Positions 106–121 are enriched in basic residues; that stretch reads ARTRKGPRRTVANKKK.

It belongs to the universal ribosomal protein uS13 family. Part of the 30S ribosomal subunit. Forms a loose heterodimer with protein S19. Forms two bridges to the 50S subunit in the 70S ribosome.

Its function is as follows. Located at the top of the head of the 30S subunit, it contacts several helices of the 16S rRNA. In the 70S ribosome it contacts the 23S rRNA (bridge B1a) and protein L5 of the 50S subunit (bridge B1b), connecting the 2 subunits; these bridges are implicated in subunit movement. Contacts the tRNAs in the A and P-sites. The sequence is that of Small ribosomal subunit protein uS13 from Anoxybacillus flavithermus (strain DSM 21510 / WK1).